A 639-amino-acid polypeptide reads, in one-letter code: MSQDNEYGAGQIQVLEGLEAVRKRPAMYIGSTDSRGLHHLVYEVVDNSIDEALAGHCDAIEVALHEDGSVSVTDNGRGIPVDTHEQYDRPALEVIMTVLHAGGKFDNKSYQVSGGLHGVGVSVVNALSSELEVEVKRDGAVWTHRFEVGEPQVEEFERVRDLEPGEDTGTTIRFWPDDGIFETTEFDFKTLENRLRELAFLNSGVEISLSDERTDESSTFLFEGGIREFVEYLNETKTALHDDVIYYDDESEGIEVEIAMQATDELQGSIHAFANNINTREGGTHLTGFKTALTRVVNDYANTHDMLDDLDGDNLRGEDVREGLTAVISIKHPDPQFEGQTKTKLGNSEVRGIVESVTHQQLGTFFEENPDTATAIISKAVEAARARKAAKQAEELTRRKSALESTSLPGKLADCQSRDPAESELFIVEGDSAGGSAKQGRDRKFQAILPLKGKILNVEKHRLDRILENDEIRALITAIGGGVGDEFDIEKARYQRLILMTDADVDGAHIRTLLLTLLYRHMRPLIEAGYVYAAQPPLYRVRYRGNTYDAMDEAERDRIIEEECNGNPTQVQRFKGLGEMNPDQLWDTTMNPENRVLKRITVEDAAAADRMFNILMGDAVGPRKQFIKDHANDAEWVDI.

A compositionally biased stretch (basic and acidic residues) spans 392–402 (QAEELTRRKSA). A disordered region spans residues 392 to 416 (QAEELTRRKSALESTSLPGKLADCQ). The 115-residue stretch at 423 to 537 (SELFIVEGDS…AGYVYAAQPP (115 aa)) folds into the Toprim domain. Positions 429, 502, and 504 each coordinate Mg(2+). A Glycyl lysine isopeptide (Lys-Gly) (interchain with G-Cter in SAMP2) cross-link involves residue K624.

It belongs to the type II topoisomerase GyrB family. As to quaternary structure, heterotetramer, composed of two GyrA and two GyrB chains. In the heterotetramer, GyrA contains the active site tyrosine that forms a transient covalent intermediate with DNA, while GyrB binds cofactors and catalyzes ATP hydrolysis. Mg(2+) serves as cofactor. It depends on Mn(2+) as a cofactor. Ca(2+) is required as a cofactor.

It localises to the cytoplasm. It catalyses the reaction ATP-dependent breakage, passage and rejoining of double-stranded DNA.. A type II topoisomerase that negatively supercoils closed circular double-stranded (ds) DNA in an ATP-dependent manner to modulate DNA topology and maintain chromosomes in an underwound state. Negative supercoiling favors strand separation, and DNA replication, transcription, recombination and repair, all of which involve strand separation. Also able to catalyze the interconversion of other topological isomers of dsDNA rings, including catenanes and knotted rings. Type II topoisomerases break and join 2 DNA strands simultaneously in an ATP-dependent manner. This Haloferax volcanii (strain ATCC 29605 / DSM 3757 / JCM 8879 / NBRC 14742 / NCIMB 2012 / VKM B-1768 / DS2) (Halobacterium volcanii) protein is DNA gyrase subunit B.